The sequence spans 120 residues: MARVKRGVVARARHKKVLKQAKGYYGARSRVYRVAFQAVTKAGQYAYRDRRAKKRTFRQLWIARINAASRQNGLSYSRFISGLKKTSVEIDRKILADIAVYDQVAFAALVEKAKEGLAAA.

Belongs to the bacterial ribosomal protein bL20 family.

Binds directly to 23S ribosomal RNA and is necessary for the in vitro assembly process of the 50S ribosomal subunit. It is not involved in the protein synthesizing functions of that subunit. This chain is Large ribosomal subunit protein bL20, found in Pseudoalteromonas translucida (strain TAC 125).